The primary structure comprises 67 residues: DNA-directed RNA polymerases I, II, and III subunit RPABC5 (67 aa).

Zn(2+) contacts are provided by cysteine 7, cysteine 10, cysteine 44, and cysteine 45.

Belongs to the archaeal Rpo10/eukaryotic RPB10 RNA polymerase subunit family. As to quaternary structure, component of the RNA polymerase I (Pol I), RNA polymerase II (Pol II) and RNA polymerase III (Pol III) complexes consisting of at least 13, 12 and 17 subunits, respectively.

It is found in the nucleus. Its function is as follows. DNA-dependent RNA polymerase catalyzes the transcription of DNA into RNA using the four ribonucleoside triphosphates as substrates. Common component of RNA polymerases I, II and III which synthesize ribosomal RNA precursors, mRNA precursors and many functional non-coding RNAs, and a small RNAs, such as 5S rRNA and tRNAs, respectively. Pol II is the central component of the basal RNA polymerase II transcription machinery. Pols are composed of mobile elements that move relative to each other. In Pol II, Polr2L is part of the core element with the central large cleft. This chain is DNA-directed RNA polymerases I, II, and III subunit RPABC5, found in Drosophila melanogaster (Fruit fly).